The primary structure comprises 113 residues: Nucleoid-associated protein Athe_1143 (113 aa).

Belongs to the YbaB/EbfC family. In terms of assembly, homodimer.

The protein resides in the cytoplasm. The protein localises to the nucleoid. In terms of biological role, binds to DNA and alters its conformation. May be involved in regulation of gene expression, nucleoid organization and DNA protection. This is Nucleoid-associated protein Athe_1143 from Caldicellulosiruptor bescii (strain ATCC BAA-1888 / DSM 6725 / KCTC 15123 / Z-1320) (Anaerocellum thermophilum).